The following is a 280-amino-acid chain: Protein YibA (280 aa).

The polypeptide is Protein YibA (yibA) (Escherichia coli O157:H7).